The following is a 391-amino-acid chain: Isochorismate synthase EntC (391 aa).

Positions 140, 142, 145, and 146 each coordinate Mg(2+). Lysine 147 (proton acceptor) is an active-site residue. The active-site Proton donor is the glutamate 197. Isochorismate-binding residues include glycine 214, serine 215, glutamate 241, alanine 303, arginine 347, and glycine 361. A Mg(2+)-binding site is contributed by glutamate 241. Residue glutamate 376 participates in Mg(2+) binding. Residue lysine 380 participates in isochorismate binding.

The protein belongs to the isochorismate synthase family. As to quaternary structure, monomer. Forms a specific pairwise interaction with EntB; this interaction likely facilitates substrate channeling to connect the EntB and EntC active sites. The cofactor is Mg(2+).

The enzyme catalyses chorismate = isochorismate. Its pathway is siderophore biosynthesis; enterobactin biosynthesis. Involved in the biosynthesis of the siderophore enterobactin (macrocyclic trimeric lactone of N-(2,3-dihydroxybenzoyl)-serine). Catalyzes the reversible conversion of chorismate to isochorismate. In Escherichia coli O157:H7, this protein is Isochorismate synthase EntC.